The sequence spans 523 residues: MAAVAVAVREDSGSGMKAELPPGPGAVGREMTKEEKLQLRKEKKQQKKKRKEEKGAEPETGSAVSAAQCQVGPTRELPESGIQLGTPREKVPAGRSKAELRAERRAKQEAERALKQARKGEQGGPPPKASPSTAGETPSGVKRLPEYPQVDDLLLRRLVKKPERQQVPTRKDYGSKVSLFSHLPQYSRQNSLTQFMSIPSSVIHPAMVRLGLQYSQGLVSGSNARCIALLRALQQVIQDYTTPPNEELSRDLVNKLKPYMSFLTQCRPLSASMHNAIKFLNKEITSVGSSKREEEAKSELRAAIDRYVQEKIVLAAQAISRFAYQKISNGDVILVYGCSSLVSRILQEAWTEGRRFRVVVVDSRPWLEGRHTLRSLVHAGVPASYLLIPAASYVLPEVSKVLLGAHALLANGSVMSRVGTAQLALVARAHNVPVLVCCETYKFCERVQTDAFVSNELDDPDDLQCKRGEHVALANWQNHASLRLLNLVYDVTPPELVDLVITELGMIPCSSVPVVLRVKSSDQ.

Residues 1–147 (MAAVAVAVRE…PSGVKRLPEY (147 aa)) form a disordered region. At alanine 2 the chain carries N-acetylalanine. Serine 12 is modified (phosphoserine). A compositionally biased stretch (basic and acidic residues) spans 30–40 (EMTKEEKLQLR). Residues 41-51 (KEKKQQKKKRK) show a composition bias toward basic residues. Threonine 86 bears the Phosphothreonine mark. Residues 87-121 (PREKVPAGRSKAELRAERRAKQEAERALKQARKGE) are compositionally biased toward basic and acidic residues. Serine 130 carries the post-translational modification Phosphoserine. A may bind the chemical integrated stress response (ISR) inhibitor ISRIB region spans residues 170-179 (RKDYGSKVSL).

This sequence belongs to the eIF-2B alpha/beta/delta subunits family. As to quaternary structure, component of the translation initiation factor 2B (eIF2B) complex which is a heterodecamer of two sets of five different subunits: alpha, beta, gamma, delta and epsilon. Subunits alpha, beta and delta comprise a regulatory subcomplex and subunits epsilon and gamma comprise a catalytic subcomplex. Within the complex, the hexameric regulatory complex resides at the center, with the two heterodimeric catalytic subcomplexes bound on opposite sides.

It localises to the cytoplasm. The protein localises to the cytosol. With respect to regulation, activated by the chemical integrated stress response (ISR) inhibitor ISRIB which stimulates guanine nucleotide exchange factor activity for both phosphorylated and unphosphorylated eIF2. In terms of biological role, acts as a component of the translation initiation factor 2B (eIF2B) complex, which catalyzes the exchange of GDP for GTP on eukaryotic initiation factor 2 (eIF2) gamma subunit. Its guanine nucleotide exchange factor activity is repressed when bound to eIF2 complex phosphorylated on the alpha subunit, thereby limiting the amount of methionyl-initiator methionine tRNA available to the ribosome and consequently global translation is repressed. This Homo sapiens (Human) protein is Translation initiation factor eIF2B subunit delta (EIF2B4).